We begin with the raw amino-acid sequence, 456 residues long: Argininosuccinate lyase (456 aa).

It belongs to the lyase 1 family. Argininosuccinate lyase subfamily.

The protein localises to the cytoplasm. It carries out the reaction 2-(N(omega)-L-arginino)succinate = fumarate + L-arginine. The protein operates within amino-acid biosynthesis; L-arginine biosynthesis; L-arginine from L-ornithine and carbamoyl phosphate: step 3/3. The polypeptide is Argininosuccinate lyase (Shewanella woodyi (strain ATCC 51908 / MS32)).